Here is a 263-residue protein sequence, read N- to C-terminus: Small ribosomal subunit protein eS4, Y isoform 2 (263 aa).

In terms of domain architecture, S4 RNA-binding spans leucine 42–aspartate 104.

It belongs to the eukaryotic ribosomal protein eS4 family.

The sequence is that of Small ribosomal subunit protein eS4, Y isoform 2 (RPS4Y2) from Pan troglodytes (Chimpanzee).